Here is a 218-residue protein sequence, read N- to C-terminus: NAD(P)H-quinone oxidoreductase subunit U, chloroplastic (218 aa).

The transit peptide at 1 to 53 directs the protein to the chloroplast; that stretch reads MASLSTITQPSLVHIPGESVLHHVPSTCSFPWKPTINTKRIICSPARNSSEVS. Residues 47–72 form a disordered region; it reads RNSSEVSAEAETEGGSSTAVDEAPKE. Residues 95 to 159 enclose the J domain; that stretch reads DHYGRLGIFR…EERRMYDWSL (65 aa). Residues 197–217 form a helical membrane-spanning segment; the sequence is ILGYFIGAWLVLGVALSVAFN.

In terms of assembly, part of the chloroplast NDH complex, composed of a mixture of chloroplast and nucleus encoded subunits. Component of the electron donor-binding subcomplex, at least composed of NDHS, NDHT and NDHU.

It is found in the plastid. Its subcellular location is the chloroplast thylakoid membrane. The catalysed reaction is a plastoquinone + NADH + (n+1) H(+)(in) = a plastoquinol + NAD(+) + n H(+)(out). It catalyses the reaction a plastoquinone + NADPH + (n+1) H(+)(in) = a plastoquinol + NADP(+) + n H(+)(out). In terms of biological role, NDH shuttles electrons from NAD(P)H:plastoquinone, via FMN and iron-sulfur (Fe-S) centers, to quinones in the photosynthetic chain and possibly in a chloroplast respiratory chain. The immediate electron acceptor for the enzyme in this species is believed to be plastoquinone. Couples the redox reaction to proton translocation, and thus conserves the redox energy in a proton gradient. The sequence is that of NAD(P)H-quinone oxidoreductase subunit U, chloroplastic from Arabidopsis thaliana (Mouse-ear cress).